The sequence spans 346 residues: Biotin synthase (346 aa).

The Radical SAM core domain maps to 38-256 (QQVQVSTLLS…IAVARIMMPT (219 aa)). Residues C53, C57, and C60 each contribute to the [4Fe-4S] cluster site. Residues C97, C128, C188, and R260 each contribute to the [2Fe-2S] cluster site.

It belongs to the radical SAM superfamily. Biotin synthase family. As to quaternary structure, homodimer. The cofactor is [4Fe-4S] cluster. [2Fe-2S] cluster serves as cofactor.

It catalyses the reaction (4R,5S)-dethiobiotin + (sulfur carrier)-SH + 2 reduced [2Fe-2S]-[ferredoxin] + 2 S-adenosyl-L-methionine = (sulfur carrier)-H + biotin + 2 5'-deoxyadenosine + 2 L-methionine + 2 oxidized [2Fe-2S]-[ferredoxin]. The protein operates within cofactor biosynthesis; biotin biosynthesis; biotin from 7,8-diaminononanoate: step 2/2. Its function is as follows. Catalyzes the conversion of dethiobiotin (DTB) to biotin by the insertion of a sulfur atom into dethiobiotin via a radical-based mechanism. This Salmonella choleraesuis (strain SC-B67) protein is Biotin synthase.